The following is a 124-amino-acid chain: Small ribosomal subunit protein uS12 (124 aa).

Residue D89 is modified to 3-methylthioaspartic acid.

Belongs to the universal ribosomal protein uS12 family. In terms of assembly, part of the 30S ribosomal subunit. Contacts proteins S8 and S17. May interact with IF1 in the 30S initiation complex.

With S4 and S5 plays an important role in translational accuracy. Its function is as follows. Interacts with and stabilizes bases of the 16S rRNA that are involved in tRNA selection in the A site and with the mRNA backbone. Located at the interface of the 30S and 50S subunits, it traverses the body of the 30S subunit contacting proteins on the other side and probably holding the rRNA structure together. The combined cluster of proteins S8, S12 and S17 appears to hold together the shoulder and platform of the 30S subunit. This chain is Small ribosomal subunit protein uS12, found in Proteus mirabilis (strain HI4320).